Here is a 105-residue protein sequence, read N- to C-terminus: Large ribosomal subunit protein bL21 (105 aa).

The protein belongs to the bacterial ribosomal protein bL21 family. In terms of assembly, part of the 50S ribosomal subunit. Contacts protein L20.

This protein binds to 23S rRNA in the presence of protein L20. This chain is Large ribosomal subunit protein bL21, found in Rhizobium rhizogenes (strain K84 / ATCC BAA-868) (Agrobacterium radiobacter).